We begin with the raw amino-acid sequence, 627 residues long: Carene synthase 3, chloroplastic (627 aa).

The transit peptide at 1 to 36 (MSVISIVPLASKSCLYKSLMSSTHELKALCRPIATL) directs the protein to the chloroplast. Residues Asp378, Asp382, and Asp530 each contribute to the Mg(2+) site. Positions 378–382 (DDMYD) match the DDXXD motif motif.

This sequence belongs to the terpene synthase family. Tpsd subfamily. Mg(2+) is required as a cofactor. Mn(2+) serves as cofactor.

It is found in the plastid. The protein resides in the chloroplast. It catalyses the reaction (2E)-geranyl diphosphate = (+)-car-3-ene + diphosphate. The protein operates within terpene metabolism; oleoresin biosynthesis. In terms of biological role, terpene synthase (TPS) involved in defensive oleoresin formation in conifers in response to insect attack or other injury. The chain is Carene synthase 3, chloroplastic (TPS-3car3) from Picea sitchensis (Sitka spruce).